The following is a 122-amino-acid chain: Large ribosomal subunit protein uL14 (122 aa).

This sequence belongs to the universal ribosomal protein uL14 family. As to quaternary structure, part of the 50S ribosomal subunit. Forms a cluster with proteins L3 and L19. In the 70S ribosome, L14 and L19 interact and together make contacts with the 16S rRNA in bridges B5 and B8.

Functionally, binds to 23S rRNA. Forms part of two intersubunit bridges in the 70S ribosome. The polypeptide is Large ribosomal subunit protein uL14 (Enterococcus faecalis (strain ATCC 700802 / V583)).